The primary structure comprises 372 residues: NAD(P)H-quinone oxidoreductase subunit 1 (372 aa).

A run of 8 helical transmembrane segments spans residues 27–47, 97–117, 128–148, 176–196, 204–224, 266–286, 308–328, and 347–367; these read IIWLPLPMLLVLVAAVVGVLV, ILFTAGPILVLVPVILSWLIV, VGIGIFLWIALSSIQPIGLLM, LALSVLAIVLMTNSLSTIDIV, ILSWNIWRQPVGFIVFWICAL, ILSALLVSILYLGGWGFPVPV, SIGIVMTVLKAYLLVFIAILL, and FLLPISLANLLITAGLKLAFP.

This sequence belongs to the complex I subunit 1 family. As to quaternary structure, NDH-1 is composed of at least 11 different subunits.

The protein localises to the cellular thylakoid membrane. The enzyme catalyses a plastoquinone + NADH + (n+1) H(+)(in) = a plastoquinol + NAD(+) + n H(+)(out). It catalyses the reaction a plastoquinone + NADPH + (n+1) H(+)(in) = a plastoquinol + NADP(+) + n H(+)(out). Functionally, NDH-1 shuttles electrons from an unknown electron donor, via FMN and iron-sulfur (Fe-S) centers, to quinones in the respiratory and/or the photosynthetic chain. The immediate electron acceptor for the enzyme in this species is believed to be plastoquinone. Couples the redox reaction to proton translocation, and thus conserves the redox energy in a proton gradient. The protein is NAD(P)H-quinone oxidoreductase subunit 1 of Prochlorococcus marinus (strain AS9601).